Reading from the N-terminus, the 415-residue chain is Serine hydroxymethyltransferase (415 aa).

(6S)-5,6,7,8-tetrahydrofolate contacts are provided by residues Leu122 and 126–128 (GHL). Lys230 carries the N6-(pyridoxal phosphate)lysine modification.

It belongs to the SHMT family. As to quaternary structure, homodimer. The cofactor is pyridoxal 5'-phosphate.

The protein localises to the cytoplasm. It catalyses the reaction (6R)-5,10-methylene-5,6,7,8-tetrahydrofolate + glycine + H2O = (6S)-5,6,7,8-tetrahydrofolate + L-serine. It participates in one-carbon metabolism; tetrahydrofolate interconversion. Its pathway is amino-acid biosynthesis; glycine biosynthesis; glycine from L-serine: step 1/1. Catalyzes the reversible interconversion of serine and glycine with tetrahydrofolate (THF) serving as the one-carbon carrier. This reaction serves as the major source of one-carbon groups required for the biosynthesis of purines, thymidylate, methionine, and other important biomolecules. Also exhibits THF-independent aldolase activity toward beta-hydroxyamino acids, producing glycine and aldehydes, via a retro-aldol mechanism. This chain is Serine hydroxymethyltransferase, found in Cupriavidus necator (strain ATCC 17699 / DSM 428 / KCTC 22496 / NCIMB 10442 / H16 / Stanier 337) (Ralstonia eutropha).